The sequence spans 259 residues: Chloroplastic import inner membrane translocase subunit HP30-2 (259 aa).

The next 4 membrane-spanning stretches (helical) occupy residues alanine 55 to leucine 75, asparagine 108 to lysine 124, alanine 135 to glycine 155, and methionine 158 to glycine 178.

Belongs to the Tim17/Tim22/Tim23 family. Probable component of a protein-conducting channel made of HP30-1, HP30-2 and HP20 that mediates the import of transit sequence-less proteins into the chloroplastic inner membrane. Interacts with CEQORH.

It is found in the mitochondrion membrane. It localises to the plastid. Its subcellular location is the chloroplast inner membrane. Functionally, together with HP30-1 and HP20, triggers the import and insertion of transit sequence-less multi-pass transmembrane proteins (e.g. CEQORH) into the chloroplastic inner membrane. This Arabidopsis thaliana (Mouse-ear cress) protein is Chloroplastic import inner membrane translocase subunit HP30-2.